A 421-amino-acid chain; its full sequence is Na(+)/H(+) antiporter NhaA 1 (421 aa).

The next 11 helical transmembrane spans lie at 48-68, 93-113, 129-149, 157-177, 187-207, 215-235, 253-273, 299-319, 326-346, 364-384, and 392-412; these read SSGLVLILAAVLAFAWANSPW, LYWWVNDLLMALFFLLVGLEI, SLALFAALGGMLLPAGLYTLV, AGWGVPMATDIAFALGVLALL, VLLAALAILDDLGAVLVIALF, LALGLMGAVWALGLGLNAAGV, LASGLHPTVAGVLLALTIPLG, FLILPLFALFNAGVSVAGGSL, VVLGLIIGKPLGVVAFAWLAV, GLGLLAGIGFTMALFIGGLAF, and AAKLGILTASVLAALAAITVL.

This sequence belongs to the NhaA Na(+)/H(+) (TC 2.A.33) antiporter family.

It is found in the cell membrane. The enzyme catalyses Na(+)(in) + 2 H(+)(out) = Na(+)(out) + 2 H(+)(in). In terms of biological role, na(+)/H(+) antiporter that extrudes sodium in exchange for external protons. This chain is Na(+)/H(+) antiporter NhaA 1, found in Deinococcus geothermalis (strain DSM 11300 / CIP 105573 / AG-3a).